The sequence spans 403 residues: Tyrosine--tRNA ligase (403 aa).

The short motif at 43–52 (PTAPDLHLGH) is the 'HIGH' region element. The short motif at 227–231 (KMSKS) is the 'KMSKS' region element. Residue Lys-230 coordinates ATP. Positions 338 to 399 (LPIAQLLKQT…GKRKFARVTI (62 aa)) constitute an S4 RNA-binding domain.

The protein belongs to the class-I aminoacyl-tRNA synthetase family. TyrS type 2 subfamily. As to quaternary structure, homodimer.

It is found in the cytoplasm. It carries out the reaction tRNA(Tyr) + L-tyrosine + ATP = L-tyrosyl-tRNA(Tyr) + AMP + diphosphate + H(+). Its function is as follows. Catalyzes the attachment of tyrosine to tRNA(Tyr) in a two-step reaction: tyrosine is first activated by ATP to form Tyr-AMP and then transferred to the acceptor end of tRNA(Tyr). In Nitrosospira multiformis (strain ATCC 25196 / NCIMB 11849 / C 71), this protein is Tyrosine--tRNA ligase.